A 372-amino-acid polypeptide reads, in one-letter code: Spermidine/putrescine import ATP-binding protein PotA (372 aa).

The 231-residue stretch at 12–242 (IQLKGLNKSF…PTNLFVARFI (231 aa)) folds into the ABC transporter domain. 44–51 (GPSGCGKT) provides a ligand contact to ATP.

Belongs to the ABC transporter superfamily. Spermidine/putrescine importer (TC 3.A.1.11.1) family. In terms of assembly, the complex is composed of two ATP-binding proteins (PotA), two transmembrane proteins (PotB and PotC) and a solute-binding protein (PotD).

The protein resides in the cell inner membrane. It carries out the reaction ATP + H2O + polyamine-[polyamine-binding protein]Side 1 = ADP + phosphate + polyamineSide 2 + [polyamine-binding protein]Side 1.. Functionally, part of the ABC transporter complex PotABCD involved in spermidine/putrescine import. Responsible for energy coupling to the transport system. This Photobacterium profundum (strain SS9) protein is Spermidine/putrescine import ATP-binding protein PotA.